We begin with the raw amino-acid sequence, 353 residues long: Ion-translocating oxidoreductase complex subunit D (353 aa).

3 helical membrane-spanning segments follow: residues 20 to 39 (LMRLVIYATLPGVLAQWYFF), 68 to 88 (PISHELFDGSALLTALLLGIC), and 129 to 149 (VMLLVSFPLQMTLWQPPLTLV). An FMN phosphoryl threonine modification is found at threonine 187. Transmembrane regions (helical) follow at residues 215 to 235 (LALGWEWVNAGFLLGGLFLIS), 238 to 258 (AIAWQTPISFLLSLFICSFIG), 267 to 287 (ASTMFHWFSGATMLGAFFILT), and 300 to 320 (IIVGLLAGLLVYLIRTSGGYP).

It belongs to the NqrB/RnfD family. In terms of assembly, the complex is composed of six subunits: RnfA, RnfB, RnfC, RnfD, RnfE and RnfG. The cofactor is FMN.

The protein resides in the cell inner membrane. Part of a membrane-bound complex that couples electron transfer with translocation of ions across the membrane. The protein is Ion-translocating oxidoreductase complex subunit D of Colwellia psychrerythraea (strain 34H / ATCC BAA-681) (Vibrio psychroerythus).